Consider the following 352-residue polypeptide: B1 bradykinin receptor (352 aa).

The Extracellular segment spans residues 1–41 (MASWPPLELQSSNQSQLFPQNATACDNAPEAWDLLHRVLPT). 2 N-linked (GlcNAc...) asparagine glycosylation sites follow: Asn-13 and Asn-21. The chain crosses the membrane as a helical span at residues 42-62 (FIISICSFGLLGNLFVLLVFL). At 63–72 (LPRRRLNVAE) the chain is on the cytoplasmic side. A helical transmembrane segment spans residues 73–93 (IYLANLAASDLVFVLGLPFWA). Residues 94-110 (ENIWNQFNWPFGALLCR) are Extracellular-facing. Cysteines 109 and 188 form a disulfide. The chain crosses the membrane as a helical span at residues 111-131 (VINGIIKANLFISIFLVVAIS). Residues 132 to 153 (QDRYCVLVHPMASRRRQRRRQA) are Cytoplasmic-facing. A helical membrane pass occupies residues 154-174 (RVTCVLIWVVGGLLSIPTFLL). The Extracellular portion of the chain corresponds to 175–206 (RSIQAVPDLNITACILLLPHEAWHFARIVELN). N-linked (GlcNAc...) asparagine glycosylation is present at Asn-184. The chain crosses the membrane as a helical span at residues 207–227 (ILAFLLPLAAIIFFNYHILAS). At 228–250 (LRGREEVSRTRCGGSKDSKTTAL) the chain is on the cytoplasmic side. Residues 251 to 271 (ILTLVVAFLVCWAPYHFFAFL) form a helical membrane-spanning segment. Over 272–294 (EFLFQVQAVRGCFWEDFIDLGLQ) the chain is Extracellular. The chain crosses the membrane as a helical span at residues 295-315 (LANFLAFTNSSLNPVIYVFVG). Topologically, residues 316 to 352 (RLFRTKVWELYKQCTPKSLAPISSSHRKEIFQLFWRN) are cytoplasmic. Residue Cys-329 is the site of S-palmitoyl cysteine attachment.

It belongs to the G-protein coupled receptor 1 family. Bradykinin receptor subfamily. BDKRB1 sub-subfamily.

It localises to the cell membrane. In terms of biological role, this is a receptor for bradykinin. Could be a factor in chronic pain and inflammation. This Macaca mulatta (Rhesus macaque) protein is B1 bradykinin receptor (BDKRB1).